Consider the following 166-residue polypeptide: Large ribosomal subunit protein uL10 (166 aa).

It belongs to the universal ribosomal protein uL10 family. In terms of assembly, part of the ribosomal stalk of the 50S ribosomal subunit. The N-terminus interacts with L11 and the large rRNA to form the base of the stalk. The C-terminus forms an elongated spine to which L12 dimers bind in a sequential fashion forming a multimeric L10(L12)X complex.

Functionally, forms part of the ribosomal stalk, playing a central role in the interaction of the ribosome with GTP-bound translation factors. In Bacillus cereus (strain G9842), this protein is Large ribosomal subunit protein uL10.